Consider the following 95-residue polypeptide: Large ribosomal subunit protein bL25 (95 aa).

Belongs to the bacterial ribosomal protein bL25 family. Part of the 50S ribosomal subunit; part of the 5S rRNA/L5/L18/L25 subcomplex. Contacts the 5S rRNA. Binds to the 5S rRNA independently of L5 and L18.

This is one of the proteins that binds to the 5S RNA in the ribosome where it forms part of the central protuberance. This chain is Large ribosomal subunit protein bL25, found in Shewanella piezotolerans (strain WP3 / JCM 13877).